A 274-amino-acid polypeptide reads, in one-letter code: Penicillin-insensitive murein endopeptidase (274 aa).

A signal peptide spans 1 to 19; the sequence is MKNTVIALLALLASAGSLA. 3 disulfides stabilise this stretch: Cys-44/Cys-265, Cys-187/Cys-235, and Cys-216/Cys-223. Residues His-110, His-113, Asp-120, Asp-147, His-150, and His-211 each coordinate Zn(2+). The segment at 224–263 is disordered; it reads EDQAPPPPGDGCGAELQSWFEPPKPGSTPPVKKTPPPLPP. Over residues 245 to 263 the composition is skewed to pro residues; sequence PPKPGSTPPVKKTPPPLPP.

The protein belongs to the peptidase M74 family. Dimer. The cofactor is Zn(2+).

The protein localises to the periplasm. Functionally, murein endopeptidase that cleaves the D-alanyl-meso-2,6-diamino-pimelyl amide bond that connects peptidoglycan strands. Likely plays a role in the removal of murein from the sacculus. The protein is Penicillin-insensitive murein endopeptidase of Klebsiella pneumoniae subsp. pneumoniae (strain ATCC 700721 / MGH 78578).